The chain runs to 429 residues: Dihydroorotase (429 aa).

Zn(2+) contacts are provided by H59 and H61. Substrate is bound by residues 61 to 63 (HLR) and N93. Zn(2+) is bound by residues K143, H171, H229, and D298. Position 143 is an N6-carboxylysine (K143). The active site involves D298. Substrate is bound by residues H302 and 316–317 (AG).

The protein belongs to the metallo-dependent hydrolases superfamily. DHOase family. Class I DHOase subfamily. Requires Zn(2+) as cofactor.

It carries out the reaction (S)-dihydroorotate + H2O = N-carbamoyl-L-aspartate + H(+). It functions in the pathway pyrimidine metabolism; UMP biosynthesis via de novo pathway; (S)-dihydroorotate from bicarbonate: step 3/3. Functionally, catalyzes the reversible cyclization of carbamoyl aspartate to dihydroorotate. The polypeptide is Dihydroorotase (Methanosphaera stadtmanae (strain ATCC 43021 / DSM 3091 / JCM 11832 / MCB-3)).